Reading from the N-terminus, the 589-residue chain is Protein kinase G11A (589 aa).

The segment at 1–167 (MASKAMPRAP…SACSSISSVT (167 aa)) is disordered. Composition is skewed to polar residues over residues 15 to 36 (NLQS…SPSK), 46 to 55 (AESSKPNSEV), and 63 to 76 (TQHQ…TGSN). Over residues 91 to 100 (RLADEEKGVV) the composition is skewed to basic and acidic residues. The segment covering 142–165 (SSSRCRPSTSSDVSDESACSSISS) has biased composition (low complexity). In terms of domain architecture, Protein kinase spans 195–533 (FKLLKKLGCG…ATEIKQHPFF (339 aa)). ATP contacts are provided by residues 201–209 (LGCGDIGSV) and Lys224. Asp320 (proton acceptor) is an active-site residue. Positions 551–589 (RPVEIERPPKQPVSTSEPAAAPSDAAQKSSDSYLEFDFF) are disordered.

The protein belongs to the protein kinase superfamily. Ser/Thr protein kinase family.

The enzyme catalyses L-seryl-[protein] + ATP = O-phospho-L-seryl-[protein] + ADP + H(+). It carries out the reaction L-threonyl-[protein] + ATP = O-phospho-L-threonyl-[protein] + ADP + H(+). Its function is as follows. May play a role in the regulation of metabolism and signal transduction processes. The chain is Protein kinase G11A from Oryza sativa subsp. indica (Rice).